A 183-amino-acid polypeptide reads, in one-letter code: dTDP-4-dehydrorhamnose 3,5-epimerase (183 aa).

Substrate-binding positions include Arg24, Glu29, Gln48–Asn50, and Arg60. The active-site Proton acceptor is the His63. Lys73 and His120 together coordinate substrate. Tyr133 functions as the Proton donor in the catalytic mechanism. The substrate site is built by Glu144 and Lys169.

This sequence belongs to the dTDP-4-dehydrorhamnose 3,5-epimerase family. In terms of assembly, homodimer.

It catalyses the reaction dTDP-4-dehydro-6-deoxy-alpha-D-glucose = dTDP-4-dehydro-beta-L-rhamnose. The protein operates within carbohydrate biosynthesis; dTDP-L-rhamnose biosynthesis. It functions in the pathway bacterial outer membrane biogenesis; LPS O-antigen biosynthesis. Functionally, catalyzes the epimerization of the C3' and C5'positions of dTDP-6-deoxy-D-xylo-4-hexulose, forming dTDP-6-deoxy-L-lyxo-4-hexulose. This is dTDP-4-dehydrorhamnose 3,5-epimerase from Salmonella typhimurium (strain LT2 / SGSC1412 / ATCC 700720).